A 33-amino-acid chain; its full sequence is Gastrin (33 aa).

Pyrrolidone carboxylic acid occurs at positions 1 and 18. Residue Tyr-28 is modified to Sulfotyrosine. The residue at position 33 (Phe-33) is a Phenylalanine amide.

This sequence belongs to the gastrin/cholecystokinin family.

It is found in the secreted. Its function is as follows. Gastrin stimulates the stomach mucosa to produce and secrete hydrochloric acid and the pancreas to secrete its digestive enzymes. It also stimulates smooth muscle contraction and increases blood circulation and water secretion in the stomach and intestine. The chain is Gastrin (GAST) from Didelphis virginiana (North American opossum).